We begin with the raw amino-acid sequence, 200 residues long: uncharacterized protein (200 aa).

2 stretches are compositionally biased toward low complexity: residues 1–13 (MTSAETASRAAES) and 28–44 (PSPAAPSRPGAPAAGPR). 2 disordered regions span residues 1 to 116 (MTSA…GGPG) and 137 to 200 (LPRD…SSFF). The segment covering 88–102 (RCGRPRRRDPRRRRT) has biased composition (basic residues). Low complexity predominate over residues 189–200 (PSSSSGLLSSFF).

This is an uncharacterized protein from Homo sapiens (Human).